The following is a 142-amino-acid chain: Putative pre-16S rRNA nuclease (142 aa).

This sequence belongs to the YqgF nuclease family.

The protein localises to the cytoplasm. In terms of biological role, could be a nuclease involved in processing of the 5'-end of pre-16S rRNA. The chain is Putative pre-16S rRNA nuclease from Malacoplasma penetrans (strain HF-2) (Mycoplasma penetrans).